A 194-amino-acid chain; its full sequence is Porimin (194 aa).

The first 24 residues, 1-24 (MALCARAALLLGALQVLALPGAVA), serve as a signal peptide directing secretion. The Extracellular portion of the chain corresponds to 25–151 (QETYAQGSPS…PTKGKGSKFD (127 aa)). 6 N-linked (GlcNAc...) asparagine glycosylation sites follow: Asn36, Asn47, Asn51, Asn59, Asn76, and Asn114. A disordered region spans residues 88–124 (KVSTPGVSPHVTPSASKSTPKTSASPNSTQTSASMTT). Positions 99–124 (TPSASKSTPKTSASPNSTQTSASMTT) are enriched in low complexity. A helical membrane pass occupies residues 152 to 172 (AGSFVGGIVLTLGVLSILYIG). The Cytoplasmic segment spans residues 173–194 (CKMYYSRRGIRYRSIDEHDAII). A Phosphoserine modification is found at Ser186.

It belongs to the CD164 family.

The protein localises to the membrane. Functionally, implicated in oncotic cell death, characterized by cell swelling, organelle swelling, vacuolization and increased membrane permeability. This is Porimin (Tmem123) from Rattus norvegicus (Rat).